Consider the following 337-residue polypeptide: Gastrula zinc finger protein XlCGF26.1 (337 aa).

12 C2H2-type zinc fingers span residues F6–H28, F34–H56, F62–H84, F90–H112, F118–H140, F146–H168, F174–H196, F202–H224, F230–H252, F258–H280, F286–H309, and F315–H337.

Belongs to the krueppel C2H2-type zinc-finger protein family.

It localises to the nucleus. In terms of biological role, may be involved in transcriptional regulation. This is Gastrula zinc finger protein XlCGF26.1 from Xenopus laevis (African clawed frog).